We begin with the raw amino-acid sequence, 352 residues long: Divinyl chlorophyll a/b light-harvesting protein PcbB (352 aa).

The next 6 membrane-spanning stretches (helical) occupy residues 27 to 47, 89 to 109, 142 to 162, 203 to 223, 243 to 263, and 307 to 327; these read FIAAHAAHAGLMMFWAGAFTL, CTVIAVLHLIFSGVLGAGGIL, FILGHHLIFLGLANIQFVEWA, VMGGHAFLAFFQIIGGAFHII, AVLSYSLAGVGYCALVAAFWS, and LANVHFYLGFFFIQGHLWHAL.

It belongs to the PsbB/PsbC family. IsiA/Pcb subfamily. In terms of assembly, the antenna complex consists of divinyl chlorophylls (a and b) and divinyl chlorophyll a/b binding proteins and binds more divinyl chlorophyll b than does the antenna complex from high-light-adapted Prochlorococcus. Divinyl chlorophyll a is required as a cofactor. The cofactor is divinyl chlorophyll b.

The protein localises to the cellular thylakoid membrane. Functionally, the antenna complex functions as a light receptor, it captures and delivers excitation energy to photosystems II and I. The Prochlorales pcb genes are not related to higher plant LHCs. The chain is Divinyl chlorophyll a/b light-harvesting protein PcbB (pcbB) from Prochlorococcus marinus (strain NATL2A).